A 468-amino-acid chain; its full sequence is Argininosuccinate lyase (468 aa).

This sequence belongs to the lyase 1 family. Argininosuccinate lyase subfamily.

It is found in the cytoplasm. The catalysed reaction is 2-(N(omega)-L-arginino)succinate = fumarate + L-arginine. It functions in the pathway amino-acid biosynthesis; L-arginine biosynthesis; L-arginine from L-ornithine and carbamoyl phosphate: step 3/3. The sequence is that of Argininosuccinate lyase from Hahella chejuensis (strain KCTC 2396).